Consider the following 95-residue polypeptide: Large ribosomal subunit protein bL27 (95 aa).

Residues methionine 1–phenylalanine 9 constitute a propeptide that is removed on maturation.

The protein belongs to the bacterial ribosomal protein bL27 family. In terms of processing, the N-terminus is cleaved by ribosomal processing cysteine protease Prp.

This is Large ribosomal subunit protein bL27 from Agathobacter rectalis (strain ATCC 33656 / DSM 3377 / JCM 17463 / KCTC 5835 / VPI 0990) (Eubacterium rectale).